The sequence spans 480 residues: Sestrin-2 (480 aa).

The residue at position 1 (methionine 1) is an N-acetylmethionine. The tract at residues 20-45 is disordered; that stretch reads PGGVGDSGPGEEQRESRARRGPRGPS. The tract at residues 66 to 239 is N-terminal domain; mediates the alkylhydroperoxide reductase activity; the sequence is GLEALMSSGR…APTPPSEQSS (174 aa). Cysteine 125 functions as the Cysteine sulfenic acid (-SOH) intermediate in the catalytic mechanism. Lysine 175 is covalently cross-linked (Glycyl lysine isopeptide (Lys-Gly) (interchain with G-Cter in ubiquitin)). Disordered stretches follow at residues 222 to 252 and 272 to 291; these read ADGSPAPQAPTPPSEQSSPPSRDPLNNSGGF and LLRDEGTSQEEMESRFELEK. Position 249 is a phosphoserine (serine 249). The tract at residues 308-480 is C-terminal domain; mediates TORC1 regulation; it reads PHPDMLCFVE…ALRAITRYMT (173 aa). L-leucine contacts are provided by residues 374 to 377, threonine 386, and glutamate 451; that span reads TYNT.

It belongs to the sestrin family. Interacts with the GATOR2 complex which is composed of MIOS, SEC13, SEH1L, WDR24 and WDR59; the interaction is negatively regulated by leucine. Conveys leucine availability via direct interaction with SEH1L and WDR24 components of the GATOR2 complex. Interacts with RRAGA, RRAGB, RRAGC and RRAGD; may function as a guanine nucleotide dissociation inhibitor for RRAGs and regulate them. May interact with the TORC2 complex. Interacts with KEAP1, RBX1, SQSTM and ULK1; to regulate the degradation of KEAP1. May also associate with the complex composed of TSC1, TSC2 and the AMP-responsive protein kinase/AMPK to regulate TORC1 signaling. May interact with PRDX1. In terms of processing, phosphorylated by ULK1 at multiple sites. Ubiquitinated at Lys-175 by RNF167 via 'Lys-63'-linked polyubiquitination in response to leucine deprivation: ubiquitination promotes SESN2-interaction with the GATOR2 complex, leading to inhibit the TORC1 signaling pathway. Deubiquitinated at Lys-175 by STAMBPL1, promoting the TORC1 signaling pathway. Ubiquitinated by RNF186; ubiquitination mediates proteasomal degradation. As to expression, widely expressed.

Its subcellular location is the cytoplasm. It carries out the reaction a hydroperoxide + L-cysteinyl-[protein] = S-hydroxy-L-cysteinyl-[protein] + an alcohol. Functionally, functions as an intracellular leucine sensor that negatively regulates the mTORC1 signaling pathway through the GATOR complex. In absence of leucine, binds the GATOR subcomplex GATOR2 and prevents mTORC1 signaling. Binding of leucine to SESN2 disrupts its interaction with GATOR2 thereby activating the TORC1 signaling pathway. This stress-inducible metabolic regulator also plays a role in protection against oxidative and genotoxic stresses. May negatively regulate protein translation in response to endoplasmic reticulum stress, via mTORC1. May positively regulate the transcription by NFE2L2 of genes involved in the response to oxidative stress by facilitating the SQSTM1-mediated autophagic degradation of KEAP1. May also mediate TP53 inhibition of TORC1 signaling upon genotoxic stress. Moreover, may prevent the accumulation of reactive oxygen species (ROS) through the alkylhydroperoxide reductase activity born by the N-terminal domain of the protein. Was originally reported to contribute to oxidative stress resistance by reducing PRDX1. However, this could not be confirmed. This Homo sapiens (Human) protein is Sestrin-2.